Reading from the N-terminus, the 350-residue chain is Kelch domain-containing protein 8A (350 aa).

Kelch repeat units follow at residues 1 to 31, 32 to 79, 81 to 127, 128 to 175, 176 to 222, 224 to 278, and 279 to 326; these read MEVP…ETGG, QVYA…ALGK, IMVI…AKDY, RVYA…LRGS, KIYV…TLDN, LYSL…GLSG, and RVIV…VFKN.

This is Kelch domain-containing protein 8A (Klhdc8a) from Mus musculus (Mouse).